The sequence spans 251 residues: Probable transcriptional regulatory protein cbdbA400 (251 aa).

Belongs to the TACO1 family.

It localises to the cytoplasm. The protein is Probable transcriptional regulatory protein cbdbA400 of Dehalococcoides mccartyi (strain CBDB1).